The primary structure comprises 408 residues: Bone morphogenetic protein 4 (408 aa).

The N-terminal stretch at 1 to 19 (MIPGNRMLMVVLLCQVLLG) is a signal peptide. Residues 20-292 (GASHASLIPE…HTLTRRRAKR (273 aa)) constitute a propeptide that is removed on maturation. At Ser91 the chain carries Phosphoserine. Positions 91-111 (SGEEEEEEQSQGTGLEYPERP) are disordered. N-linked (GlcNAc...) asparagine glycans are attached at residues Asn144 and Asn209. A disordered region spans residues 281–307 (RGHTLTRRRAKRSPKHHPQRSRKKNKN). Positions 284-307 (TLTRRRAKRSPKHHPQRSRKKNKN) are enriched in basic residues. Disulfide bonds link Cys308–Cys373, Cys337–Cys405, and Cys341–Cys407. 2 N-linked (GlcNAc...) asparagine glycosylation sites follow: Asn350 and Asn365.

It belongs to the TGF-beta family. Homodimer; disulfide-linked. Interacts with SOSTDC1, GREM2, RGMA, RGMB and RGMC. Part of a complex consisting of TWSG1 and CHRD. Interacts with the serine proteases, HTRA1 and HTRA3; the interaction with either inhibits BMP4-mediated signaling. The HTRA protease activity is required for this inhibition. Interacts with FBN1 (via N-terminal domain) and FBN2. Interacts with type I receptor BMPR1A. Interacts with type II receptor BMPR2. Interacts with FSTL1; this interaction inhibits the activation of the BMP4/Smad1/5/8 signaling pathway. Interacts with SCUBE3. Interacts with TGFBR3. In the cochlea, detected in nonprosensory regions and outer sulcus (at protein level). Prior to gastrulation, expressed in the extraembryonic ectoderm. Later, expressed in the extraembryonic mesoderm.

It is found in the secreted. The protein localises to the extracellular space. Its subcellular location is the extracellular matrix. Growth factor of the TGF-beta superfamily that plays essential roles in many developmental processes, including neurogenesis, vascular development, angiogenesis and osteogenesis. Acts in concert with PTHLH/PTHRP to stimulate ductal outgrowth during embryonic mammary development and to inhibit hair follicle induction. Initiates the canonical BMP signaling cascade by associating with type I receptor BMPR1A and type II receptor BMPR2. Once all three components are bound together in a complex at the cell surface, BMPR2 phosphorylates and activates BMPR1A. In turn, BMPR1A propagates signal by phosphorylating SMAD1/5/8 that travel to the nucleus and act as activators and repressors of transcription of target genes. Positively regulates the expression of odontogenic development regulator MSX1 via inducing the IPO7-mediated import of SMAD1 to the nucleus. Required for MSX1-mediated mesenchymal molar tooth bud development beyond the bud stage, via promoting Wnt signaling. Acts as a positive regulator of odontoblast differentiation during mesenchymal tooth germ formation, expression is repressed during the bell stage by MSX1-mediated inhibition of CTNNB1 signaling. Able to induce its own expression in dental mesenchymal cells and also in the neighboring dental epithelial cells via an MSX1-mediated pathway. Can also signal through non-canonical BMP pathways such as ERK/MAP kinase, PI3K/Akt or SRC cascades. For example, induces SRC phosphorylation which, in turn, activates VEGFR2, leading to an angiogenic response. In Mus musculus (Mouse), this protein is Bone morphogenetic protein 4.